Here is a 349-residue protein sequence, read N- to C-terminus: Inhibitor of nuclear factor kappa-B kinase-interacting protein (349 aa).

Basic residues predominate over residues 1-11; sequence MSEVKSRKKSG. The tract at residues 1–39 is disordered; the sequence is MSEVKSRKKSGTKGAPAEPGKRNEGGKSPEARGGGGRGW. Basic and acidic residues predominate over residues 19 to 30; the sequence is PGKRNEGGKSPE. Residues 45–61 traverse the membrane as a helical segment; sequence GVSLLSLGTCLGLAWFV. The N-linked (GlcNAc...) asparagine glycan is linked to Asn145. 2 coiled-coil regions span residues 183–216 and 304–347; these read GLVT…IGDL and IGRL…HISD. N-linked (GlcNAc...) asparagine glycosylation is present at Asn327.

Post-translationally, N-glycosylated.

It is found in the endoplasmic reticulum membrane. In terms of biological role, target of p53/TP53 with pro-apoptotic function. The sequence is that of Inhibitor of nuclear factor kappa-B kinase-interacting protein (IKBIP) from Bos taurus (Bovine).